Reading from the N-terminus, the 96-residue chain is MTNLEDKLSASIKTENKDTIAPASTPAKPAARSAAPETTKPASTGAKPATRTAAKKPVARATTTKPAVSKSSKPSADDIQVPAHDTSTHPRRVWPD.

Basic and acidic residues predominate over residues 1–18 (MTNLEDKLSASIKTENKD). Residues 1-96 (MTNLEDKLSA…STHPRRVWPD (96 aa)) are disordered. The segment covering 59 to 74 (ARATTTKPAVSKSSKP) has biased composition (low complexity).

As to quaternary structure, monomer, associates with McdA:DNA. Interacts with shell components of the carboxysome.

The protein resides in the carboxysome. Its function is as follows. McdA and McdB together mediate carboxysome positioning on the nucleoid and to prevent their aggregation in the cell. Undergoes liquid-liquid phase separation at pH 7.0 in the presence of crowders polyethylene glycol or Ficoll. McdA is an ATPase that forms dynamic gradients on the nucleoid in response to adapter protein McdB, which associates with carboxysomes. The interplay between McdA gradients on the nucleoid and McdB-bound carboxysomes result in the equal spacing of Cbs along the cell length. Stimulates the ATPase activity of McdA, causing McdA to be released from DNA. In terms of biological role, incorrect positioning (aggregation) of carboxysomes results in reduced CO(2) fixation by encapsulated form 1 ribulose-1,5-bisphosphate carboxylase (RuBisCO, cbbL/cbbS), which leads to slower growth. The protein is Maintenance of carboxysome distribution protein B of Halothiobacillus neapolitanus (strain ATCC 23641 / c2) (Thiobacillus neapolitanus).